We begin with the raw amino-acid sequence, 61 residues long: Large ribosomal subunit protein bL32 (61 aa).

A disordered region spans residues 1–44 (MAVQQNRKSRSRRDMRRSHDALTENALTVDQTTGETHRRHHVTK). Residues 7–16 (RKSRSRRDMR) show a composition bias toward basic residues. A compositionally biased stretch (polar residues) spans 25–34 (NALTVDQTTG).

This sequence belongs to the bacterial ribosomal protein bL32 family.

The protein is Large ribosomal subunit protein bL32 of Acinetobacter baylyi (strain ATCC 33305 / BD413 / ADP1).